A 116-amino-acid chain; its full sequence is Large ribosomal subunit protein bL19 (116 aa).

It belongs to the bacterial ribosomal protein bL19 family.

Functionally, this protein is located at the 30S-50S ribosomal subunit interface and may play a role in the structure and function of the aminoacyl-tRNA binding site. The protein is Large ribosomal subunit protein bL19 of Roseiflexus castenholzii (strain DSM 13941 / HLO8).